A 298-amino-acid chain; its full sequence is Protoheme IX farnesyltransferase (298 aa).

9 consecutive transmembrane segments (helical) span residues 16–36 (VVALIVFTALVGMFLAIPDMP), 45–65 (ALGFLGIWLAASAAAAINQLL), 93–113 (VFAGALIVISMTILVVWVNVI), 114–134 (TAVLTFASLIGYAVIYTVYLK), 141–161 (IVIGGLAGATPPMLGWAAVTG), 172–192 (SLLVLIIFIWTPPHFWALAIF), 223–243 (VLLAIVTLAPVAVGMSGVFYL), 244–264 (GGAIVLNAVFLWYAWRMLNPP), and 277–297 (IVYLMALFAFLMVDHLLLPWV).

It belongs to the UbiA prenyltransferase family. Protoheme IX farnesyltransferase subfamily.

It localises to the cell inner membrane. The enzyme catalyses heme b + (2E,6E)-farnesyl diphosphate + H2O = Fe(II)-heme o + diphosphate. It participates in porphyrin-containing compound metabolism; heme O biosynthesis; heme O from protoheme: step 1/1. Converts heme B (protoheme IX) to heme O by substitution of the vinyl group on carbon 2 of heme B porphyrin ring with a hydroxyethyl farnesyl side group. In Xanthomonas euvesicatoria pv. vesicatoria (strain 85-10) (Xanthomonas campestris pv. vesicatoria), this protein is Protoheme IX farnesyltransferase.